Consider the following 312-residue polypeptide: Protoheme IX farnesyltransferase 2 (312 aa).

The next 8 helical transmembrane spans lie at 31-51, 52-72, 119-139, 152-172, 179-199, 225-245, 247-267, and 283-303; these read VMSLVIFTALVGLMIAPGHIH, PVLGFIAILCIAVGAGASGAL, ALVNWYAGGLLAFTIFFYVVI, IVIGGAAGALPPVVAWAAATG, LLLFLIIFFWTPPHFWALALF, ILLYTIVLVAIAAAPWPLGYF, WVYGVTSLILGAGMLVLAIEV, and LFAFSILYLFALFAVLLLDVV.

Belongs to the UbiA prenyltransferase family. Protoheme IX farnesyltransferase subfamily.

The protein localises to the cell inner membrane. The catalysed reaction is heme b + (2E,6E)-farnesyl diphosphate + H2O = Fe(II)-heme o + diphosphate. It functions in the pathway porphyrin-containing compound metabolism; heme O biosynthesis; heme O from protoheme: step 1/1. Functionally, converts heme B (protoheme IX) to heme O by substitution of the vinyl group on carbon 2 of heme B porphyrin ring with a hydroxyethyl farnesyl side group. The protein is Protoheme IX farnesyltransferase 2 of Nitrobacter winogradskyi (strain ATCC 25391 / DSM 10237 / CIP 104748 / NCIMB 11846 / Nb-255).